The following is a 1040-amino-acid chain: Eukaryotic translation initiation factor 3 subunit A (1040 aa).

Positions 92 to 121 form a coiled coil; that stretch reads LKKFIELAEKKVTEAQTKADEIQSSLESAA. Positions 339–523 constitute a PCI domain; it reads MTKAASFVLL…GVLTFDSDVF (185 aa). A coiled-coil region spans residues 608-906; it reads RVIIEKKKEA…AEARRAARKA (299 aa). Composition is skewed to basic and acidic residues over residues 617–632 and 795–901; these read AATD…EETR and EVSE…EARR. 2 disordered regions span residues 617–641 and 795–1040; these read AATD…QQLQ and EVSE…QQNQ. 4 stretches are compositionally biased toward low complexity: residues 908–917, 945–955, 978–993, and 1004–1018; these read LEPAAPAARP, KEAAGGAAPEA, SGSS…NGAP, and SSSS…TPGS.

It belongs to the eIF-3 subunit A family. As to quaternary structure, component of the eukaryotic translation initiation factor 3 (eIF-3) complex.

Its subcellular location is the cytoplasm. In terms of biological role, RNA-binding component of the eukaryotic translation initiation factor 3 (eIF-3) complex, which is involved in protein synthesis of a specialized repertoire of mRNAs and, together with other initiation factors, stimulates binding of mRNA and methionyl-tRNAi to the 40S ribosome. The eIF-3 complex specifically targets and initiates translation of a subset of mRNAs involved in cell proliferation. In Aspergillus terreus (strain NIH 2624 / FGSC A1156), this protein is Eukaryotic translation initiation factor 3 subunit A (tif32).